The primary structure comprises 161 residues: Nucleotide-binding protein BTH_I0730 (161 aa).

It belongs to the YajQ family.

Its function is as follows. Nucleotide-binding protein. In Burkholderia thailandensis (strain ATCC 700388 / DSM 13276 / CCUG 48851 / CIP 106301 / E264), this protein is Nucleotide-binding protein BTH_I0730.